The primary structure comprises 352 residues: NAD(P)H oxidoreductase RTN4IP1, mitochondrial (352 aa).

The region spanning 11-348 (ESLDLLEYKT…NSNSNGKIII (338 aa)) is the Enoyl reductase (ER) domain. NADPH is bound by residues Val165, Tyr206, Ala296, and Phe298.

It belongs to the zinc-containing alcohol dehydrogenase family. Quinone oxidoreductase subfamily.

It is found in the mitochondrion matrix. The enzyme catalyses a quinone + NADH + H(+) = a quinol + NAD(+). It catalyses the reaction a quinone + NADPH + H(+) = a quinol + NADP(+). It participates in cofactor biosynthesis; ubiquinone biosynthesis. In terms of biological role, NAD(P)H oxidoreductase involved in the ubiquinone biosynthetic pathway. Required for the O-methyltransferase activity of coq3. The chain is NAD(P)H oxidoreductase RTN4IP1, mitochondrial (rtn4ip1) from Dictyostelium discoideum (Social amoeba).